Here is a 229-residue protein sequence, read N- to C-terminus: Ribonuclease 3 (229 aa).

The 129-residue stretch at Phe2–Gly130 folds into the RNase III domain. Glu43 contributes to the Mg(2+) binding site. Asp47 is an active-site residue. Mg(2+)-binding residues include Asp116 and Glu119. The active site involves Glu119. The 70-residue stretch at Asp157–Gly226 folds into the DRBM domain.

The protein belongs to the ribonuclease III family. As to quaternary structure, homodimer. Mg(2+) is required as a cofactor.

It localises to the cytoplasm. It catalyses the reaction Endonucleolytic cleavage to 5'-phosphomonoester.. Functionally, digests double-stranded RNA. Involved in the processing of primary rRNA transcript to yield the immediate precursors to the large and small rRNAs (23S and 16S). Processes some mRNAs, and tRNAs when they are encoded in the rRNA operon. Processes pre-crRNA and tracrRNA of type II CRISPR loci if present in the organism. This is Ribonuclease 3 from Oleidesulfovibrio alaskensis (strain ATCC BAA-1058 / DSM 17464 / G20) (Desulfovibrio alaskensis).